The following is a 773-amino-acid chain: MIITKSWLNDWLELEEISSDKIAKTLNSIGIEVDRVGALKAPDKVVVGYVKEKIKHENSDKLSICQVDIGSETLQIVCGAANVDAGQFVAVATKGAIMPNGMEIKEAKLRGVDSCGMLCSSLELGFEKINEGIMLLDESIGKLELGRPLNTYEIFNDELIEVELTPNRGDCLSIYGIARDLAAALNLNLKEPKPFKESENVLGIGRILRLAAEKELNGLYNYRAIGLKEEIQTNLLLSLRLAQIEGLGKNSIENLLNYATHSTGVLFNAYDLSSFSEKDEEFIINLSKQVHGETKVSYKDKLLSFSGIFQNNESRCKDDSKIIIIEANYTDPLVIADAKIYHKDQDEKMLYRSFRGSEPKLNLGMDFLLGIFEHIPNLVIYSSSQQILTDKELPIIPISIEGISDIIGQNVDKDEVLKILKKLGFELILSGEGLINVKAPLHRPDIKNLSDICEEVVRIIGIDNIASKGLEFIEKNRLNSAYKNYIEFLNLRKRAVASGYFESLHYVLDNGEELKRLGFDSVKLKLINPITAELNTLRTTLLNHLLNAASLNAKNSKKIIKLFELGAVFNVNNQELNRIAFIHSGLKEEAKISNKAKPESVQFYDFLLDIKNIIGDFKLKSSKYNILSPYEQADIYLSDIKVGFIGRLHLKIENERDLPKTYICELDLDLIRQDFKIAKPYSKFPAITRDLSVLIPKGFEYNQIKNCIEELNLEILENFRLVDIYSDENLKEFYSITISFSFRDINKTLEDNQVNECMDKILNTLKNLGLDLR.

The region spanning 39-150 is the tRNA-binding domain; it reads LKAPDKVVVG…GKLELGRPLN (112 aa). The 77-residue stretch at 391-467 folds into the B5 domain; that stretch reads KELPIIPISI…RIIGIDNIAS (77 aa). Aspartate 445, aspartate 451, glutamate 454, and glutamate 455 together coordinate Mg(2+). The FDX-ACB domain maps to 682–773; sequence SKFPAITRDL…TLKNLGLDLR (92 aa).

Belongs to the phenylalanyl-tRNA synthetase beta subunit family. Type 1 subfamily. Tetramer of two alpha and two beta subunits. The cofactor is Mg(2+).

The protein localises to the cytoplasm. It carries out the reaction tRNA(Phe) + L-phenylalanine + ATP = L-phenylalanyl-tRNA(Phe) + AMP + diphosphate + H(+). The sequence is that of Phenylalanine--tRNA ligase beta subunit from Campylobacter jejuni (strain RM1221).